A 157-amino-acid polypeptide reads, in one-letter code: Crossover junction endodeoxyribonuclease RuvC (157 aa).

Catalysis depends on residues Asp-7, Glu-66, and Asp-139. The Mg(2+) site is built by Asp-7, Glu-66, and Asp-139.

This sequence belongs to the RuvC family. Homodimer which binds Holliday junction (HJ) DNA. The HJ becomes 2-fold symmetrical on binding to RuvC with unstacked arms; it has a different conformation from HJ DNA in complex with RuvA. In the full resolvosome a probable DNA-RuvA(4)-RuvB(12)-RuvC(2) complex forms which resolves the HJ. The cofactor is Mg(2+).

It is found in the cytoplasm. The enzyme catalyses Endonucleolytic cleavage at a junction such as a reciprocal single-stranded crossover between two homologous DNA duplexes (Holliday junction).. In terms of biological role, the RuvA-RuvB-RuvC complex processes Holliday junction (HJ) DNA during genetic recombination and DNA repair. Endonuclease that resolves HJ intermediates. Cleaves cruciform DNA by making single-stranded nicks across the HJ at symmetrical positions within the homologous arms, yielding a 5'-phosphate and a 3'-hydroxyl group; requires a central core of homology in the junction. The consensus cleavage sequence is 5'-(A/T)TT(C/G)-3'. Cleavage occurs on the 3'-side of the TT dinucleotide at the point of strand exchange. HJ branch migration catalyzed by RuvA-RuvB allows RuvC to scan DNA until it finds its consensus sequence, where it cleaves and resolves the cruciform DNA. In Helicobacter pylori (strain J99 / ATCC 700824) (Campylobacter pylori J99), this protein is Crossover junction endodeoxyribonuclease RuvC.